A 272-amino-acid polypeptide reads, in one-letter code: Orotidine 5'-phosphate decarboxylase (272 aa).

The active-site Proton donor is the lysine 92.

It belongs to the OMP decarboxylase family. Type 2 subfamily.

The catalysed reaction is orotidine 5'-phosphate + H(+) = UMP + CO2. The protein operates within pyrimidine metabolism; UMP biosynthesis via de novo pathway; UMP from orotate: step 2/2. This chain is Orotidine 5'-phosphate decarboxylase (pyrF), found in Deinococcus radiodurans (strain ATCC 13939 / DSM 20539 / JCM 16871 / CCUG 27074 / LMG 4051 / NBRC 15346 / NCIMB 9279 / VKM B-1422 / R1).